A 281-amino-acid polypeptide reads, in one-letter code: BEN domain-containing protein 6 (281 aa).

2 disordered regions span residues 15-62 (VLRK…ETPL) and 143-172 (SFAS…PGEK). The stretch at 19 to 99 (RKRKRTETAN…RLRQSLVMLQ (81 aa)) forms a coiled coil. A compositionally biased stretch (low complexity) spans 143-160 (SFASLCSNSNSTSSSPSS). A compositionally biased stretch (basic and acidic residues) spans 162 to 172 (KAEEEQHPGEK). A BEN domain is found at 171 to 271 (EKQFTIERWQ…NCTKKPNASK (101 aa)).

As to quaternary structure, interacts (via BEN domain) with RBPJ.

The protein localises to the nucleus. In terms of biological role, acts as a corepressor of recombining binding protein suppressor hairless (RBPJ) and inhibits Notch signaling in neural stem cells, thereby opposing their self-renewal and promoting neurogenesis. The polypeptide is BEN domain-containing protein 6 (Bend6) (Mus musculus (Mouse)).